Here is a 449-residue protein sequence, read N- to C-terminus: Hyaluronidase (449 aa).

Positions 1–23 are cleaved as a signal peptide; sequence MYHIWIKFLAAWIFLKRFNGVHV. Disulfide bonds link Cys-47/Cys-340 and Cys-211/Cys-227. Asn-67, Asn-103, and Asn-111 each carry an N-linked (GlcNAc...) asparagine glycan. The active-site Proton donor is Glu-135. A glycan (N-linked (GlcNAc...) asparagine) is linked at Asn-153. Residue Asn-357 is glycosylated (N-linked (GlcNAc...) asparagine). Intrachain disulfides connect Cys-365-Cys-376, Cys-370-Cys-427, and Cys-429-Cys-438. Asn-401 is a glycosylation site (N-linked (GlcNAc...) asparagine). An EGF-like domain is found at 427–438; the sequence is CQCYQGWKGLYC.

It belongs to the glycosyl hydrolase 56 family. As to quaternary structure, monomer. Expressed by the venom gland.

Its subcellular location is the secreted. It carries out the reaction Random hydrolysis of (1-&gt;4)-linkages between N-acetyl-beta-D-glucosamine and D-glucuronate residues in hyaluronate.. Snake venom endo-hyaluronidase that degrades hyaluronan to smaller oligosaccharide fragments. In venom, it is not toxic by itself, but increases the diffusion of other venom proteins by degrading the extracellular matrix. In addition, it displays antiedematogenic activity. This is Hyaluronidase from Echis pyramidum leakeyi (Leakey's carpet viper).